Reading from the N-terminus, the 112-residue chain is C-X-C motif chemokine 6 (112 aa).

The N-terminal stretch at 1–36 (MRLLSSRAARVSGPSGSLCALLALLLLTPPGPLASA) is a signal peptide. Intrachain disulfides connect C48–C74 and C50–C90.

Belongs to the intercrine alpha (chemokine CxC) family.

It is found in the secreted. Chemotactic for neutrophil granulocytes. Signals through binding and activation of its receptors (CXCR1 and CXCR2). In addition to its chemotactic and angiogenic properties, it has strong antibacterial activity against Gram-positive and Gram-negative bacteria (90-fold-higher when compared to CXCL5 and CXCL7). The sequence is that of C-X-C motif chemokine 6 (CXCL6) from Bos taurus (Bovine).